A 478-amino-acid chain; its full sequence is Adenosylhomocysteinase (478 aa).

Substrate contacts are provided by threonine 67, aspartate 144, and glutamate 204. An NAD(+)-binding site is contributed by 205-207; that stretch reads TTT. Substrate contacts are provided by lysine 234 and aspartate 238. NAD(+) contacts are provided by residues asparagine 239, 268–273, glutamate 291, asparagine 326, 347–349, and asparagine 392; these read GYGDVG and IGH.

The protein belongs to the adenosylhomocysteinase family. NAD(+) serves as cofactor.

The protein resides in the cytoplasm. The enzyme catalyses S-adenosyl-L-homocysteine + H2O = L-homocysteine + adenosine. It functions in the pathway amino-acid biosynthesis; L-homocysteine biosynthesis; L-homocysteine from S-adenosyl-L-homocysteine: step 1/1. Its function is as follows. May play a key role in the regulation of the intracellular concentration of adenosylhomocysteine. This is Adenosylhomocysteinase from Nitrosomonas europaea (strain ATCC 19718 / CIP 103999 / KCTC 2705 / NBRC 14298).